A 464-amino-acid chain; its full sequence is Cysteine--tRNA ligase (464 aa).

Cysteine 32 is a Zn(2+) binding site. Residues 34–44 (VTVYDDCHIGH) carry the 'HIGH' region motif. Residues cysteine 213, histidine 238, and glutamate 242 each coordinate Zn(2+). Residues 270-274 (KMSKS) carry the 'KMSKS' region motif. Lysine 273 contributes to the ATP binding site.

This sequence belongs to the class-I aminoacyl-tRNA synthetase family. Monomer. The cofactor is Zn(2+).

The protein resides in the cytoplasm. It carries out the reaction tRNA(Cys) + L-cysteine + ATP = L-cysteinyl-tRNA(Cys) + AMP + diphosphate. The sequence is that of Cysteine--tRNA ligase from Francisella tularensis subsp. tularensis (strain SCHU S4 / Schu 4).